The following is a 388-amino-acid chain: Diacylglycerol O-acyltransferase 2 (388 aa).

Over 1–69 (MKTLIAAYSG…NRSKVEKQLQ (69 aa)) the chain is Cytoplasmic. A helical membrane pass occupies residues 70-88 (VISVLQWVLSFLVLGVACS). At 89-92 (VILM) the chain is on the lumenal side. The helical transmembrane segment at 93–112 (YTFCTDCWLIAVLYFTWLAF) threads the bilayer. Residues 113-388 (DWNTPKKGGR…LPETEVLEVN (276 aa)) lie on the Cytoplasmic side of the membrane.

Belongs to the diacylglycerol acyltransferase family. Forms multimeric complexes consisting of several DGAT2 subunits. Interacts with SLC27A1 and this interaction is enhanced in the presence of ZFYVE1. In terms of tissue distribution, predominantly expressed in liver. Also expressed in testis.

It localises to the endoplasmic reticulum membrane. It is found in the lipid droplet. Its subcellular location is the cytoplasm. The protein resides in the perinuclear region. It catalyses the reaction an acyl-CoA + a 1,2-diacyl-sn-glycerol = a triacyl-sn-glycerol + CoA. The catalysed reaction is all-trans-retinol + an acyl-CoA = an all-trans-retinyl ester + CoA. The enzyme catalyses 1,2-di-(9Z-octadecenoyl)-sn-glycerol + hexadecanoyl-CoA = 1,2-di-(9Z)-octadecenoyl-3-hexadecanoyl-sn-glycerol + CoA. It carries out the reaction 1,2-di-(9Z-octadecenoyl)-sn-glycerol + (9Z)-octadecenoyl-CoA = 1,2,3-tri-(9Z-octadecenoyl)-glycerol + CoA. It catalyses the reaction 1,3-di-(9Z-octadecenoyl)-glycerol + (9Z)-octadecenoyl-CoA = 1,2,3-tri-(9Z-octadecenoyl)-glycerol + CoA. The catalysed reaction is 2,3-di-(9Z)-octadecenoyl-sn-glycerol + (9Z)-octadecenoyl-CoA = 1,2,3-tri-(9Z-octadecenoyl)-glycerol + CoA. The enzyme catalyses 2-(9Z-octadecenoyl)-glycerol + hexadecanoyl-CoA = 1-hexadecanoyl-2-(9Z-octadecenoyl)-sn-glycerol + CoA. It carries out the reaction 2-(9Z-octadecenoyl)-glycerol + (9Z)-octadecenoyl-CoA = 1,2-di-(9Z-octadecenoyl)-sn-glycerol + CoA. It catalyses the reaction all-trans-retinol + hexadecanoyl-CoA = all-trans-retinyl hexadecanoate + CoA. The catalysed reaction is 1-O-(9Z-octadecenyl)-glycerol + (9Z)-octadecenoyl-CoA = 1-O-(9Z-octadecyl)-3-(9Z-octadecenoyl)-glycerol + CoA. The enzyme catalyses 1-(9Z-octadecenoyl)-glycerol + (9Z)-octadecenoyl-CoA = 1,2-di-(9Z-octadecenoyl)-glycerol + CoA. Its pathway is glycerolipid metabolism; triacylglycerol biosynthesis. With respect to regulation, inhibited by niacin. Essential acyltransferase that catalyzes the terminal and only committed step in triacylglycerol synthesis by using diacylglycerol and fatty acyl CoA as substrates. Required for synthesis and storage of intracellular triglycerides. Probably plays a central role in cytosolic lipid accumulation. In liver, is primarily responsible for incorporating endogenously synthesized fatty acids into triglycerides. Also functions as an acyl-CoA retinol acyltransferase (ARAT). Also able to use 1-monoalkylglycerol (1-MAkG) as an acyl acceptor for the synthesis of monoalkyl-monoacylglycerol (MAMAG). In Mus musculus (Mouse), this protein is Diacylglycerol O-acyltransferase 2.